A 397-amino-acid chain; its full sequence is uncharacterized protein (397 aa).

12 consecutive transmembrane segments (helical) span residues 5 to 25, 43 to 63, 69 to 89, 92 to 112, 131 to 151, 157 to 177, 202 to 222, 233 to 253, 269 to 289, 293 to 313, 333 to 353, and 360 to 380; these read LKIL…LWPL, LVLM…GFLF, FKSI…LVFF, WPAY…VFPA, AIYV…GVVA, YVFL…YFGF, FAAL…YSQW, IGIS…LIVL, LKAQ…MLLT, FPMF…VWPA, FVNS…GVLV, and ALVL…LLYD.

The protein belongs to the major facilitator superfamily.

Its subcellular location is the cell membrane. This is an uncharacterized protein from Bacillus subtilis (strain 168).